We begin with the raw amino-acid sequence, 216 residues long: MDFYYSPRGSGCRTVIMVAKALGVKLNMKLLNTLEKDQLKPEFVKLNPQHTIPTLVDNGFSIWESRAIAVYLVEKYGKDDTLFPKDPKKQALVNQRLYFDMGTLYDSFAKYYYPLFHTGKPGSDEDFKKIESSFEYLNIFLEGQNYVAGDHLTVADIAILSTVSTFEIFDFDLNKYPNVARWYANAKKVTPGWEENWKGAVELKGVFDARQAAAKQ.

A GST N-terminal domain is found at 1-80 (MDFYYSPRGS…YLVEKYGKDD (80 aa)). Glutathione-binding positions include 50–52 (HTI) and 64–66 (ESR). One can recognise a GST C-terminal domain in the interval 86–207 (DPKKQALVNQ…KGAVELKGVF (122 aa)).

This sequence belongs to the GST superfamily. Delta family. As to quaternary structure, homodimer.

It catalyses the reaction RX + glutathione = an S-substituted glutathione + a halide anion + H(+). Its function is as follows. Conjugation of reduced glutathione to a wide number of exogenous and endogenous hydrophobic electrophiles. May be involved in detoxification. The chain is Glutathione S-transferase D5 from Drosophila melanogaster (Fruit fly).